Here is a 197-residue protein sequence, read N- to C-terminus: Dephospho-CoA kinase (197 aa).

A DPCK domain is found at Arg-4 to Ala-197. Gly-12–Thr-17 lines the ATP pocket.

This sequence belongs to the CoaE family.

The protein localises to the cytoplasm. It carries out the reaction 3'-dephospho-CoA + ATP = ADP + CoA + H(+). It functions in the pathway cofactor biosynthesis; coenzyme A biosynthesis; CoA from (R)-pantothenate: step 5/5. Its function is as follows. Catalyzes the phosphorylation of the 3'-hydroxyl group of dephosphocoenzyme A to form coenzyme A. This chain is Dephospho-CoA kinase, found in Ruegeria pomeroyi (strain ATCC 700808 / DSM 15171 / DSS-3) (Silicibacter pomeroyi).